The primary structure comprises 651 residues: Threonine--tRNA ligase (651 aa).

The region spanning 1–64 is the TGS domain; sequence MSSVVHVTLP…EKDCTLQVLT (64 aa). A catalytic region spans residues 245–535; it reads DHRRLGPELG…LTEHYAGNFP (291 aa). Residues C336, H387, and H512 each contribute to the Zn(2+) site.

The protein belongs to the class-II aminoacyl-tRNA synthetase family. In terms of assembly, homodimer. Zn(2+) is required as a cofactor.

Its subcellular location is the cytoplasm. It catalyses the reaction tRNA(Thr) + L-threonine + ATP = L-threonyl-tRNA(Thr) + AMP + diphosphate + H(+). Functionally, catalyzes the attachment of threonine to tRNA(Thr) in a two-step reaction: L-threonine is first activated by ATP to form Thr-AMP and then transferred to the acceptor end of tRNA(Thr). Also edits incorrectly charged L-seryl-tRNA(Thr). The polypeptide is Threonine--tRNA ligase (Symbiobacterium thermophilum (strain DSM 24528 / JCM 14929 / IAM 14863 / T)).